A 111-amino-acid polypeptide reads, in one-letter code: Transcription and mRNA export factor SUS1 (111 aa).

Belongs to the ENY2 family. As to quaternary structure, component of the nuclear pore complex (NPC)-associated TREX-2 complex (transcription and export complex 2), composed of at least SUS1, SAC3, THP1, SEM1, and CDC31. TREX-2 contains 2 SUS1 chains. The TREX-2 complex interacts with the nucleoporin NUP1. Component of the 1.8 MDa SAGA transcription coactivator-HAT complex. SAGA is built of 5 distinct domains with specialized functions. Within the SAGA complex, SUS1, SGF11, SGF73 and UBP8 form an additional subcomplex of SAGA called the DUB module (deubiquitination module). Interacts directly with THP1, SAC3, SGF11, and with the RNA polymerase II.

The protein localises to the nucleus. It localises to the nucleoplasm. Its subcellular location is the cytoplasm. The protein resides in the P-body. In terms of biological role, involved in mRNA export coupled transcription activation by association with both the TREX-2 and the SAGA complexes. At the promoters, SAGA is required for recruitment of the basal transcription machinery. It influences RNA polymerase II transcriptional activity through different activities such as TBP interaction and promoter selectivity, interaction with transcription activators, and chromatin modification through histone acetylation and deubiquitination. Within the SAGA complex, participates in a subcomplex required for deubiquitination of H2B and for the maintenance of steady-state H3 methylation levels. The TREX-2 complex functions in docking export-competent ribonucleoprotein particles (mRNPs) to the nuclear entrance of the nuclear pore complex (nuclear basket). TREX-2 participates in mRNA export and accurate chromatin positioning in the nucleus by tethering genes to the nuclear periphery. May also be involved in cytoplasmic mRNA decay by interaction with components of P-bodies. The polypeptide is Transcription and mRNA export factor SUS1 (Lodderomyces elongisporus (strain ATCC 11503 / CBS 2605 / JCM 1781 / NBRC 1676 / NRRL YB-4239) (Yeast)).